The primary structure comprises 182 residues: Large ribosomal subunit protein uL6 (182 aa).

Belongs to the universal ribosomal protein uL6 family. Part of the 50S ribosomal subunit.

Functionally, this protein binds to the 23S rRNA, and is important in its secondary structure. It is located near the subunit interface in the base of the L7/L12 stalk, and near the tRNA binding site of the peptidyltransferase center. In Methanococcus maripaludis (strain C5 / ATCC BAA-1333), this protein is Large ribosomal subunit protein uL6.